We begin with the raw amino-acid sequence, 142 residues long: Hemoglobin subunit alpha (142 aa).

The Globin domain maps to 2-142 (VLSDADKTHV…VATVLTSKYR (141 aa)). Ser4 bears the Phosphoserine mark. The residue at position 8 (Lys8) is an N6-succinyllysine. Thr9 is subject to Phosphothreonine. Lys12 is subject to N6-succinyllysine. Lys17 is subject to N6-acetyllysine; alternate. Lys17 is subject to N6-succinyllysine; alternate. Tyr25 is modified (phosphotyrosine). At Ser36 the chain carries Phosphoserine. N6-succinyllysine is present on Lys41. A Phosphoserine modification is found at Ser50. Position 59 (His59) interacts with O2. Position 88 (His88) interacts with heme b. Position 103 is a phosphoserine (Ser103). The residue at position 109 (Thr109) is a Phosphothreonine. Phosphoserine occurs at positions 125 and 132. Phosphothreonine is present on residues Thr135 and Thr138. Ser139 is subject to Phosphoserine.

This sequence belongs to the globin family. In terms of assembly, heterotetramer of two alpha chains and two beta chains. Red blood cells.

Involved in oxygen transport from the lung to the various peripheral tissues. Its function is as follows. Hemopressin acts as an antagonist peptide of the cannabinoid receptor CNR1. Hemopressin-binding efficiently blocks cannabinoid receptor CNR1 and subsequent signaling. The chain is Hemoglobin subunit alpha (HBA) from Dasyurus viverrinus (Eastern quoll).